The primary structure comprises 647 residues: Acetyl-coenzyme A synthetase (647 aa).

CoA is bound by residues 190 to 193 (RGGR), T308, and N332. Residues 384–386 (GEP), 408–413 (DTWWQT), D497, and R512 each bind ATP. S520 serves as a coordination point for CoA. Position 523 (R523) interacts with ATP. Mg(2+) is bound by residues V534, H536, and V539. R581 serves as a coordination point for CoA. K606 bears the N6-acetyllysine mark.

This sequence belongs to the ATP-dependent AMP-binding enzyme family. Mg(2+) serves as cofactor. Acetylated. Deacetylation by the SIR2-homolog deacetylase activates the enzyme.

The enzyme catalyses acetate + ATP + CoA = acetyl-CoA + AMP + diphosphate. Its function is as follows. Catalyzes the conversion of acetate into acetyl-CoA (AcCoA), an essential intermediate at the junction of anabolic and catabolic pathways. AcsA undergoes a two-step reaction. In the first half reaction, AcsA combines acetate with ATP to form acetyl-adenylate (AcAMP) intermediate. In the second half reaction, it can then transfer the acetyl group from AcAMP to the sulfhydryl group of CoA, forming the product AcCoA. The sequence is that of Acetyl-coenzyme A synthetase from Parvibaculum lavamentivorans (strain DS-1 / DSM 13023 / NCIMB 13966).